Consider the following 215-residue polypeptide: Octanoyltransferase (215 aa).

Residues Pro-31–Glu-206 enclose the BPL/LPL catalytic domain. Residues Arg-70–His-77, Ser-137–Gly-139, and Gly-150–Ala-152 each bind substrate. Cys-168 functions as the Acyl-thioester intermediate in the catalytic mechanism.

It belongs to the LipB family.

The protein resides in the cytoplasm. The enzyme catalyses octanoyl-[ACP] + L-lysyl-[protein] = N(6)-octanoyl-L-lysyl-[protein] + holo-[ACP] + H(+). It participates in protein modification; protein lipoylation via endogenous pathway; protein N(6)-(lipoyl)lysine from octanoyl-[acyl-carrier-protein]: step 1/2. Its function is as follows. Catalyzes the transfer of endogenously produced octanoic acid from octanoyl-acyl-carrier-protein onto the lipoyl domains of lipoate-dependent enzymes. Lipoyl-ACP can also act as a substrate although octanoyl-ACP is likely to be the physiological substrate. The polypeptide is Octanoyltransferase (Pseudomonas putida (strain W619)).